A 330-amino-acid polypeptide reads, in one-letter code: Ketol-acid reductoisomerase (NADP(+)) (330 aa).

The region spanning 3-184 is the KARI N-terminal Rossmann domain; the sequence is LSVYYDKDID…GGGRMGVLET (182 aa). Residues 26–29, Ser52, and Ser54 each bind NADP(+); that span reads YGTQ. His109 is an active-site residue. Gly135 is an NADP(+) binding site. A KARI C-terminal knotted domain is found at 185 to 329; it reads SFKEECESDL…EILRTPFNHE (145 aa). Mg(2+)-binding residues include Asp193, Glu197, Glu229, and Glu233. Ser254 contacts substrate.

This sequence belongs to the ketol-acid reductoisomerase family. Requires Mg(2+) as cofactor.

The enzyme catalyses (2R)-2,3-dihydroxy-3-methylbutanoate + NADP(+) = (2S)-2-acetolactate + NADPH + H(+). The catalysed reaction is (2R,3R)-2,3-dihydroxy-3-methylpentanoate + NADP(+) = (S)-2-ethyl-2-hydroxy-3-oxobutanoate + NADPH + H(+). It participates in amino-acid biosynthesis; L-isoleucine biosynthesis; L-isoleucine from 2-oxobutanoate: step 2/4. Its pathway is amino-acid biosynthesis; L-valine biosynthesis; L-valine from pyruvate: step 2/4. Functionally, involved in the biosynthesis of branched-chain amino acids (BCAA). Catalyzes an alkyl-migration followed by a ketol-acid reduction of (S)-2-acetolactate (S2AL) to yield (R)-2,3-dihydroxy-isovalerate. In the isomerase reaction, S2AL is rearranged via a Mg-dependent methyl migration to produce 3-hydroxy-3-methyl-2-ketobutyrate (HMKB). In the reductase reaction, this 2-ketoacid undergoes a metal-dependent reduction by NADPH to yield (R)-2,3-dihydroxy-isovalerate. This chain is Ketol-acid reductoisomerase (NADP(+)), found in Helicobacter acinonychis (strain Sheeba).